Consider the following 142-residue polypeptide: Large ribosomal subunit protein uL11 (142 aa).

This sequence belongs to the universal ribosomal protein uL11 family. As to quaternary structure, part of the ribosomal stalk of the 50S ribosomal subunit. Interacts with L10 and the large rRNA to form the base of the stalk. L10 forms an elongated spine to which L12 dimers bind in a sequential fashion forming a multimeric L10(L12)X complex. Post-translationally, one or more lysine residues are methylated.

In terms of biological role, forms part of the ribosomal stalk which helps the ribosome interact with GTP-bound translation factors. In Rhizobium meliloti (strain 1021) (Ensifer meliloti), this protein is Large ribosomal subunit protein uL11.